The chain runs to 436 residues: 3-ketoacyl-CoA thiolase (436 aa).

Cys99 acts as the Acyl-thioester intermediate in catalysis. Active-site proton acceptor residues include His392 and Cys422.

Belongs to the thiolase-like superfamily. Thiolase family. In terms of assembly, heterotetramer of two alpha chains (FadJ) and two beta chains (FadI).

The protein localises to the cytoplasm. The catalysed reaction is an acyl-CoA + acetyl-CoA = a 3-oxoacyl-CoA + CoA. Its pathway is lipid metabolism; fatty acid beta-oxidation. Its function is as follows. Catalyzes the final step of fatty acid oxidation in which acetyl-CoA is released and the CoA ester of a fatty acid two carbons shorter is formed. This is 3-ketoacyl-CoA thiolase from Shewanella halifaxensis (strain HAW-EB4).